We begin with the raw amino-acid sequence, 558 residues long: Protein SET DOMAIN GROUP 41 (558 aa).

Positions 115–249 constitute an SET domain; it reads PSISVAIHHA…SGEEITVSYI (135 aa).

Belongs to the class V-like SAM-binding methyltransferase superfamily.

The protein is Protein SET DOMAIN GROUP 41 (SDG41) of Arabidopsis thaliana (Mouse-ear cress).